Consider the following 588-residue polypeptide: Cyclomaltodextrinase (588 aa).

Positions 247 and 326 each coordinate substrate. Asp-328 acts as the Nucleophile in catalysis. Catalysis depends on Glu-357, which acts as the Proton donor. Residues 423 to 424 (HD), Asp-468, and Arg-472 each bind substrate.

This sequence belongs to the glycosyl hydrolase 13 family. As to quaternary structure, exists as a monomer or a homodimer in solution. Homodimer is more active and stable than the monomer.

The enzyme catalyses cyclomaltodextrin + H2O = linear maltodextrin. With respect to regulation, no metal dependence, but Mn(2+) increases the activity with alpha-cyclodextrin as substrate. No effect on the activity with presence or absence of Ca(2+), Zn(2+), Tween-20 or EDTA. Its function is as follows. Hydrolyzes alpha-, beta- and gamma-cyclodextrins with the highest activity with alpha-cyclodextrin (cyclomaltohexaose). Pullulan is the preferred substrate from linear substrates. Maltose is a major product of these reactions. Is also able to hydrolyze maltotriose and acarbose, and transglycosylate their hydrolytic products. Major reaction products of maltotriose and of acarbose are maltose and glucose, and glucose and pseudotrisaccharide, respectively. No activity with glucose or maltose as substrate. The sequence is that of Cyclomaltodextrinase from Geobacillus thermopakistaniensis (strain MAS1).